The sequence spans 355 residues: Glycerol-1-phosphate dehydrogenase [NAD(P)+] (355 aa).

NAD(+) contacts are provided by residues 101–105 (GKSID) and 123–126 (TAAS). Asp-128 is a substrate binding site. Ser-132 is a binding site for NAD(+). Residue Asp-175 coordinates substrate. Zn(2+)-binding residues include Asp-175 and His-255. Residue His-259 coordinates substrate. His-271 contacts Zn(2+).

Belongs to the glycerol-1-phosphate dehydrogenase family. In terms of assembly, homodimer. It depends on Zn(2+) as a cofactor.

Its subcellular location is the cytoplasm. The enzyme catalyses sn-glycerol 1-phosphate + NAD(+) = dihydroxyacetone phosphate + NADH + H(+). It carries out the reaction sn-glycerol 1-phosphate + NADP(+) = dihydroxyacetone phosphate + NADPH + H(+). Its pathway is membrane lipid metabolism; glycerophospholipid metabolism. Catalyzes the NAD(P)H-dependent reduction of dihydroxyacetonephosphate (DHAP or glycerone phosphate) to glycerol 1-phosphate (G1P). The G1P thus generated is used as the glycerophosphate backbone of phospholipids in the cellular membranes of Archaea. In Staphylothermus marinus (strain ATCC 43588 / DSM 3639 / JCM 9404 / F1), this protein is Glycerol-1-phosphate dehydrogenase [NAD(P)+].